A 189-amino-acid chain; its full sequence is GTPase NRas (189 aa).

GTP contacts are provided by residues 10–18 (GAGGVGKSA) and 29–30 (VD). Positions 32–40 (YDPTIEDSY) match the Effector region motif. 57-61 (DTAGQ) lines the GTP pocket. At serine 89 the chain carries Phosphoserine. 116 to 119 (NKCD) provides a ligand contact to GTP. Residues 166-185 (YRMKKLNSSDDGTQGCLGLS) are hypervariable region. A Glycyl lysine isopeptide (Lys-Gly) (interchain with G-Cter in ubiquitin) cross-link involves residue lysine 170. Cysteine 181 is lipidated: S-palmitoyl cysteine. The S-farnesyl cysteine moiety is linked to residue cysteine 186. Positions 187 to 189 (AVM) are cleaved as a propeptide — removed in mature form.

The protein belongs to the small GTPase superfamily. Ras family. In terms of assembly, interacts (active GTP-bound form preferentially) with RGS14. Interacts (active GTP-bound form) with RASSF7. Interacts (active GTP-bound form) with both SHOC2 and PP1c (all isoforms) to form a tertiary complex; SHOC2 and PP1c preferably bind M-Ras/MRAS, but they also bind K-Ras/KRAS, N-Ras/NRAS and H-Ras/HRAS. Post-translationally, palmitoylated by the ZDHHC9-GOLGA7 complex. Depalmitoylated by ABHD17A, ABHD17B and ABHD17C. A continuous cycle of de- and re-palmitoylation regulates rapid exchange between plasma membrane and Golgi. In terms of processing, acetylation at Lys-104 prevents interaction with guanine nucleotide exchange factors (GEFs). Ubiquitinated by the BCR(LZTR1) E3 ubiquitin ligase complex at Lys-170 in a non-degradative manner, leading to inhibit Ras signaling by decreasing Ras association with membranes. Post-translationally, phosphorylation at Ser-89 enhances NRAS association with its downstream effectors.

The protein localises to the cell membrane. Its subcellular location is the golgi apparatus membrane. The catalysed reaction is GTP + H2O = GDP + phosphate + H(+). Alternates between an inactive form bound to GDP and an active form bound to GTP. Activated by a guanine nucleotide-exchange factor (GEF) and inactivated by a GTPase-activating protein (GAP). In terms of biological role, ras proteins bind GDP/GTP and possess intrinsic GTPase activity. This is GTPase NRas (NRAS) from Monodelphis domestica (Gray short-tailed opossum).